Reading from the N-terminus, the 629-residue chain is Mitochondrial Rho GTPase 1 (629 aa).

Topologically, residues 1–600 are cytoplasmic; sequence MSTAVRICVC…PRSEEPPADR (600 aa). A Miro 1 domain is found at 2 to 170; sequence STAVRICVCG…FYLCQKAVTH (169 aa). GTP-binding positions include 11–18, 59–63, and 115–118; these read GDEGTGKS, DTSAR, and NKSD. EF-hand domains follow at residues 186 to 221 and 306 to 341; these read ACVD…SFDK and AGYR…TPGL. The Ca(2+) site is built by D199, D201, D203, Y205, E210, D319, D321, D323, and E330. One can recognise a Miro 2 domain in the interval 421 to 585; sequence RNVVLCYILG…FVALAEAATN (165 aa). GTP contacts are provided by residues 430-437, 466-470, and 535-538; these read GSSGAGKS, ELQGG, and LKAD. Residues 601-621 traverse the membrane as a helical; Anchor for type IV membrane protein segment; sequence ASLYMALGATACAALAAFMIW. Residues 622-629 are Mitochondrial intermembrane-facing; sequence RRSTSNAA.

The protein belongs to the mitochondrial Rho GTPase family.

The protein localises to the mitochondrion outer membrane. Mitochondrial GTPase involved in mitochondrial trafficking. Probably involved in control of anterograde transport of mitochondria and their subcellular distribution. The chain is Mitochondrial Rho GTPase 1 (gem-1) from Neurospora crassa (strain ATCC 24698 / 74-OR23-1A / CBS 708.71 / DSM 1257 / FGSC 987).